A 107-amino-acid chain; its full sequence is Growth-regulated alpha protein (107 aa).

The signal sequence occupies residues 1–34 (MARAALSAAPSNPRLLRVALLLLLLVAAGRRAAG). 2 disulfide bridges follow: C43–C69 and C45–C85.

Belongs to the intercrine alpha (chemokine CxC) family. In terms of processing, N-terminal processed forms GRO-alpha(4-73), GRO-alpha(5-73) and GRO-alpha(6-73) are produced by proteolytic cleavage after secretion from peripheral blood monocytes.

It localises to the secreted. Its function is as follows. Has chemotactic activity for neutrophils. May play a role in inflammation and exerts its effects on endothelial cells in an autocrine fashion. In vitro, the processed forms GRO-alpha(4-73), GRO-alpha(5-73) and GRO-alpha(6-73) show a 30-fold higher chemotactic activity. This chain is Growth-regulated alpha protein (CXCL1), found in Homo sapiens (Human).